The chain runs to 250 residues: QNCQCDTTIYCCSQHGYCGNSYDYCGPGCQAGPCWDPCEGDGTLTVSDIVTQEFWDGIASQAAANCPGKSFYTRSNFLEAVSAYPGFGTKCTDEDRKREIAAYFAHVTHETGHLCYIEERDGHANNYCQESQQYPCNPNKEYFGRGPMQLSWNYNYIDAGKELHFDGLNDPDIVGRDPIISFKTSLWFWIRKGVQYVILDPNQGFGATIRIINGGQECDGHNTAQMMARVGYYQEYCAQLGVSPGNNLPC.

Gln-1 is modified (pyrrolidone carboxylic acid). In terms of domain architecture, Chitin-binding type-1 spans 1 to 36; it reads QNCQCDTTIYCCSQHGYCGNSYDYCGPGCQAGPCWD. 7 disulfides stabilise this stretch: Cys-3–Cys-12, Cys-5–Cys-18, Cys-11–Cys-25, Cys-29–Cys-34, Cys-66–Cys-115, Cys-128–Cys-136, and Cys-218–Cys-250. Glu-110 acts as the Proton donor in catalysis.

It belongs to the glycosyl hydrolase 19 family. Chitinase class I subfamily.

The catalysed reaction is Random endo-hydrolysis of N-acetyl-beta-D-glucosaminide (1-&gt;4)-beta-linkages in chitin and chitodextrins.. Defense against chitin-containing fungal pathogens. This is Acidic endochitinase from Dioscorea japonica (Japanese yam).